We begin with the raw amino-acid sequence, 90 residues long: Small ribosomal subunit protein bS16 (90 aa).

This sequence belongs to the bacterial ribosomal protein bS16 family.

The polypeptide is Small ribosomal subunit protein bS16 (Bacillus pumilus (strain SAFR-032)).